Reading from the N-terminus, the 341-residue chain is DnaJ homolog subfamily C member 22 (341 aa).

The 47-residue stretch at 4 to 50 (GLLMTYALWAFGGPVGLHHLYLGRDSHALLWMLTLGGGGLGWLWEFW) folds into the TM2 domain. 7 helical membrane-spanning segments follow: residues 5-25 (LLMTYALWAFGGPVGLHHLYL), 30-50 (HALLWMLTLGGGGLGWLWEFW), 81-101 (FASQMVVGVYFGLVALISLSS), 105-125 (FYIVGLPLAVGLGVLLVAAVG), 135-155 (LGAAFLTSPVFYGRPIAILPI), 185-205 (VGLAYLAFTGPLAYSTLYNTA), and 232-252 (VESVLLLPCRIWWLLVGAPGF). The 65-residue stretch at 277–341 (LAHQVLGIPE…QPKKPRASWR (65 aa)) folds into the J domain.

Its subcellular location is the membrane. Functionally, may function as a co-chaperone. This Rattus norvegicus (Rat) protein is DnaJ homolog subfamily C member 22 (Dnajc22).